The following is a 209-amino-acid chain: Kynurenine formamidase (209 aa).

F19 is a binding site for substrate. Positions 49, 53, and 55 each coordinate Zn(2+). H59 (proton donor/acceptor) is an active-site residue. Zn(2+) contacts are provided by H160 and E172.

It belongs to the Cyclase 1 superfamily. KynB family. As to quaternary structure, homodimer. Zn(2+) is required as a cofactor.

It catalyses the reaction N-formyl-L-kynurenine + H2O = L-kynurenine + formate + H(+). It functions in the pathway amino-acid degradation; L-tryptophan degradation via kynurenine pathway; L-kynurenine from L-tryptophan: step 2/2. Catalyzes the hydrolysis of N-formyl-L-kynurenine to L-kynurenine, the second step in the kynurenine pathway of tryptophan degradation. This is Kynurenine formamidase from Delftia acidovorans (strain DSM 14801 / SPH-1).